The chain runs to 1008 residues: PAN2-PAN3 deadenylation complex catalytic subunit PAN2 (1008 aa).

WD repeat units follow at residues 29-68 (GQLTDTLPLTFDLAEDLVWAGDTNGIVSSYYGETLQPYSR), 110-149 (PSLGNNLCMTFTHGPTEFVVGGNPGKLVVVNSERGDVTRV), 158-198 (HMAG…FSDV), 200-236 (VQDNVVMTCGFSAASTGHRIDPLIKVWDLRMMRAMAP), and 277-316 (AEVALVNGVKLSPRGHHFVVSDTSGQLQLWSDEPQSSFAE). The tract at residues 314–449 (FAEFSAPTAF…TCTEASMSSK (136 aa)) is linker. The USP domain occupies 450 to 755 (KVPRLYRKLE…RTVMMVYAVG (306 aa)). In terms of domain architecture, Exonuclease spans 808-976 (AIDAEFVVLK…EDSHTALLLY (169 aa)). Residues aspartate 810, glutamate 812, aspartate 915, and aspartate 968 each contribute to the a divalent metal cation site.

It belongs to the peptidase C19 family. PAN2 subfamily. Forms a heterotrimer with an asymmetric homodimer of the regulatory subunit PAN3 to form the poly(A)-nuclease (PAN) deadenylation complex. A divalent metal cation is required as a cofactor.

Its subcellular location is the cytoplasm. It carries out the reaction Exonucleolytic cleavage of poly(A) to 5'-AMP.. Positively regulated by the regulatory subunit PAN3. In terms of biological role, catalytic subunit of the poly(A)-nuclease (PAN) deadenylation complex, one of two cytoplasmic mRNA deadenylases involved in mRNA turnover. PAN specifically shortens poly(A) tails of RNA and the activity is stimulated by poly(A)-binding protein PAB1. PAN deadenylation is followed by rapid degradation of the shortened mRNA tails by the CCR4-NOT complex. Deadenylated mRNAs are then degraded by two alternative mechanisms, namely exosome-mediated 3'-5' exonucleolytic degradation, or deadenylation-dependent mRNA decaping and subsequent 5'-3' exonucleolytic degradation by XRN1. May also be involved in post-transcriptional maturation of mRNA poly(A) tails. The protein is PAN2-PAN3 deadenylation complex catalytic subunit PAN2 of Yarrowia lipolytica (strain CLIB 122 / E 150) (Yeast).